A 427-amino-acid polypeptide reads, in one-letter code: Serine--tRNA ligase (427 aa).

Residue 231 to 233 coordinates L-serine; it reads TAE. 262-264 is a binding site for ATP; it reads RSE. Glutamate 285 provides a ligand contact to L-serine. Residue 349–352 coordinates ATP; sequence EISS. Residue serine 385 participates in L-serine binding.

Belongs to the class-II aminoacyl-tRNA synthetase family. Type-1 seryl-tRNA synthetase subfamily. In terms of assembly, homodimer. The tRNA molecule binds across the dimer.

Its subcellular location is the cytoplasm. It catalyses the reaction tRNA(Ser) + L-serine + ATP = L-seryl-tRNA(Ser) + AMP + diphosphate + H(+). The catalysed reaction is tRNA(Sec) + L-serine + ATP = L-seryl-tRNA(Sec) + AMP + diphosphate + H(+). It participates in aminoacyl-tRNA biosynthesis; selenocysteinyl-tRNA(Sec) biosynthesis; L-seryl-tRNA(Sec) from L-serine and tRNA(Sec): step 1/1. Catalyzes the attachment of serine to tRNA(Ser). Is also able to aminoacylate tRNA(Sec) with serine, to form the misacylated tRNA L-seryl-tRNA(Sec), which will be further converted into selenocysteinyl-tRNA(Sec). This chain is Serine--tRNA ligase, found in Hahella chejuensis (strain KCTC 2396).